Consider the following 415-residue polypeptide: MLLAKTPCLLLVQVIAAGISFALTSLQDQCETLQHNSNFTGLACNASIDMIGTCWPSTAAGQMVARPCPEYFHGVQYNTTGNVYRECHLNGSWAGRGDYAQCQEILKQEKKTKVHYHIAIVINFLGHSISLCALLVAFILFLRLRSIRCLRNIIHWNLITAFILRNVTWFVMQLTLSHEAHDSNVVWCRLVTIAHNYFYVTNFFWMFGEGCYLHTAIVLTYSTDKLRKWMFICIGWCIPFPIIVAWAIGKLYYDNEKCWFGKKAGVYTDFIYQGPVILVLLINFIFLFNIVRILMTKLRASTTSETIQYRKAVKATLVLLPLLGITYMLFFVTPGEDEISRIVFIYFNSFLQSFQGFFVSVFYCFLNSEVRSAVRKRWHRWQDKHSIRARVARAMSIPTSPTRISFHSIKQSSAI.

Residues 1-24 form the signal peptide; sequence MLLAKTPCLLLVQVIAAGISFALT. Residues 25 to 111 are Extracellular-facing; that stretch reads SLQDQCETLQ…CQEILKQEKK (87 aa). 3 disulfides stabilise this stretch: Cys30/Cys54, Cys44/Cys87, and Cys68/Cys102. Asn38, Asn45, Asn78, and Asn90 each carry an N-linked (GlcNAc...) asparagine glycan. A helical membrane pass occupies residues 112 to 142; the sequence is TKVHYHIAIVINFLGHSISLCALLVAFILFL. The Cytoplasmic segment spans residues 143–149; the sequence is RLRSIRC. A helical membrane pass occupies residues 150 to 174; the sequence is LRNIIHWNLITAFILRNVTWFVMQL. Residues 175-189 are Extracellular-facing; sequence TLSHEAHDSNVVWCR. Cys188 and Cys258 are oxidised to a cystine. A helical membrane pass occupies residues 190-218; sequence LVTIAHNYFYVTNFFWMFGEGCYLHTAIV. The Cytoplasmic segment spans residues 219–225; that stretch reads LTYSTDK. Residues 226-253 traverse the membrane as a helical segment; it reads LRKWMFICIGWCIPFPIIVAWAIGKLYY. Residues 254–269 are Extracellular-facing; it reads DNEKCWFGKKAGVYTD. Residues 270–295 form a helical membrane-spanning segment; the sequence is FIYQGPVILVLLINFIFLFNIVRILM. Over 296–306 the chain is Cytoplasmic; it reads TKLRASTTSET. Residues 307–331 form a helical membrane-spanning segment; that stretch reads IQYRKAVKATLVLLPLLGITYMLFF. The Extracellular segment spans residues 332–338; the sequence is VTPGEDE. Residues 339–368 traverse the membrane as a helical segment; sequence ISRIVFIYFNSFLQSFQGFFVSVFYCFLNS. Residues 369–415 are Cytoplasmic-facing; that stretch reads EVRSAVRKRWHRWQDKHSIRARVARAMSIPTSPTRISFHSIKQSSAI.

The protein belongs to the G-protein coupled receptor 2 family. In terms of assembly, interacts (via N-terminal extracellular domain) with CRF and UCN.

It is found in the cell membrane. In terms of biological role, G-protein coupled receptor for CRH (corticotropin-releasing factor) and UCN (urocortin). Has high affinity for CRH and UCN. Ligand binding causes a conformation change that triggers signaling via guanine nucleotide-binding proteins (G proteins) and down-stream effectors, such as adenylate cyclase. Promotes the activation of adenylate cyclase, leading to increased intracellular cAMP levels. The protein is Corticotropin-releasing factor receptor 1 (crhr1) of Xenopus laevis (African clawed frog).